A 614-amino-acid polypeptide reads, in one-letter code: Fructokinase-like 2, chloroplastic (614 aa).

Residues 1-44 constitute a chloroplast transit peptide; sequence MASLSFTQFLSFPRCNADVPCLLQSHGFVKFRGERWNGKQSFSM. Disordered regions lie at residues 47–75 and 542–592; these read GRRK…KPSK and GYPP…YVMK. Over residues 548-563 the composition is skewed to acidic residues; the sequence is DMEEEEDDEEEDEVES. Residues 571 to 583 are compositionally biased toward basic and acidic residues; sequence ITEKEYRTSKPYD.

Belongs to the carbohydrate kinase PfkB family. As to quaternary structure, interacts with CITRX/TRXz. Binds to FLN1 and PTAC5. Associates with the plastid-encoded RNA polymerase (PEP) complex.

It localises to the plastid. The protein localises to the chloroplast. Its function is as follows. Required for proper chloroplast development, most likely through regulating plastid-encoded polymerase (PEP) dependent chloroplast transcription. Acts as a component of the transcriptionally active plastid chromosome that is required for plastid gene expression. The sequence is that of Fructokinase-like 2, chloroplastic from Arabidopsis thaliana (Mouse-ear cress).